Here is a 194-residue protein sequence, read N- to C-terminus: uncharacterized protein (194 aa).

The protein to A.rhizogenes plasmid pRia4B ORF-3 in virA region.

This is an uncharacterized protein from Sinorhizobium fredii (strain NBRC 101917 / NGR234).